A 311-amino-acid polypeptide reads, in one-letter code: Small ribosomal subunit biogenesis GTPase RsgA (311 aa).

Residues 77–239 enclose the CP-type G domain; sequence LSKQSHIIAT…IIDTPGIKGF (163 aa). Residues 126-129 and 180-188 each bind GTP; these read NKTD and GHSGVGKST. Residues C263, C268, H270, and C276 each coordinate Zn(2+).

The protein belongs to the TRAFAC class YlqF/YawG GTPase family. RsgA subfamily. Monomer. Associates with 30S ribosomal subunit, binds 16S rRNA. It depends on Zn(2+) as a cofactor.

The protein localises to the cytoplasm. Its function is as follows. One of several proteins that assist in the late maturation steps of the functional core of the 30S ribosomal subunit. Helps release RbfA from mature subunits. May play a role in the assembly of ribosomal proteins into the subunit. Circularly permuted GTPase that catalyzes slow GTP hydrolysis, GTPase activity is stimulated by the 30S ribosomal subunit. This Azobacteroides pseudotrichonymphae genomovar. CFP2 protein is Small ribosomal subunit biogenesis GTPase RsgA.